The following is a 145-amino-acid chain: uncharacterized protein (145 aa).

A disordered region spans residues 37-123 (GKGTNTAKSS…MDREASYFAP (87 aa)). The span at 38–63 (KGTNTAKSSGGNNGTNLNAKRSNTTQ) shows a compositional bias: polar residues.

This is an uncharacterized protein from Caenorhabditis elegans.